A 128-amino-acid chain; its full sequence is Small ribosomal subunit protein uS9 (128 aa).

As to quaternary structure, part of the 30S ribosomal subunit. Contacts proteins S7 and S10.

Functionally, part of the top of the head of the 30S subunit. The C-terminal region penetrates the head emerging in the P-site where it contacts tRNA. The protein is Small ribosomal subunit protein uS9 (rpsI) of Thermus thermophilus (strain ATCC 27634 / DSM 579 / HB8).